The chain runs to 66 residues: Xenoxin-2 (66 aa).

4 cysteine pairs are disulfide-bonded: C3-C24, C17-C37, C43-C58, and C59-C64.

In terms of tissue distribution, expressed by the skin dorsal glands.

Its subcellular location is the secreted. Its function is as follows. Lacks alpha-neurotoxic activity, has apparently no antibacterial activity, nor anti-coagulant potency. This Xenopus laevis (African clawed frog) protein is Xenoxin-2.